Reading from the N-terminus, the 564-residue chain is Proline--tRNA ligase (564 aa).

Belongs to the class-II aminoacyl-tRNA synthetase family. ProS type 1 subfamily. As to quaternary structure, homodimer.

Its subcellular location is the cytoplasm. The catalysed reaction is tRNA(Pro) + L-proline + ATP = L-prolyl-tRNA(Pro) + AMP + diphosphate. Catalyzes the attachment of proline to tRNA(Pro) in a two-step reaction: proline is first activated by ATP to form Pro-AMP and then transferred to the acceptor end of tRNA(Pro). As ProRS can inadvertently accommodate and process non-cognate amino acids such as alanine and cysteine, to avoid such errors it has two additional distinct editing activities against alanine. One activity is designated as 'pretransfer' editing and involves the tRNA(Pro)-independent hydrolysis of activated Ala-AMP. The other activity is designated 'posttransfer' editing and involves deacylation of mischarged Ala-tRNA(Pro). The misacylated Cys-tRNA(Pro) is not edited by ProRS. The chain is Proline--tRNA ligase from Xylella fastidiosa (strain 9a5c).